Consider the following 482-residue polypeptide: Proline--tRNA ligase (482 aa).

Belongs to the class-II aminoacyl-tRNA synthetase family. ProS type 3 subfamily. As to quaternary structure, homodimer.

The protein resides in the cytoplasm. It carries out the reaction tRNA(Pro) + L-proline + ATP = L-prolyl-tRNA(Pro) + AMP + diphosphate. In terms of biological role, catalyzes the attachment of proline to tRNA(Pro) in a two-step reaction: proline is first activated by ATP to form Pro-AMP and then transferred to the acceptor end of tRNA(Pro). This is Proline--tRNA ligase from Thermofilum pendens (strain DSM 2475 / Hrk 5).